The sequence spans 154 residues: OCIA domain-containing protein 2 (154 aa).

Residues 1–120 (MASVSTHGNQ…HSFEDQLRGA (120 aa)) enclose the OCIA domain. N6-acetyllysine is present on Lys-41.

Interacts (via OCIA domain) with OCIAD1/ASRIJ and STAT3. In terms of tissue distribution, abundant in kidney, liver and brain.

The protein resides in the endosome. It localises to the mitochondrion. Its subcellular location is the mitochondrion inner membrane. Has an essential role in the assembly of mitochondrial respiratory chain complex III. Is also required for STAT3 activation and plays a role in cell migration. The protein is OCIA domain-containing protein 2 (Ociad2) of Mus musculus (Mouse).